Consider the following 803-residue polypeptide: Ribonucleoside-diphosphate reductase large chain (803 aa).

In terms of domain architecture, ATP-cone spans 1-91 (MYVVNRKGEE…TSNLHKNTSS (91 aa)). Residues 5–6 (NR), 11–17 (EPVSFDQ), T52, and D56 each bind ATP. S215 contacts GDP. Cysteines 216 and 442 form a disulfide. DTTP contacts are provided by residues 224-226 (DSI), K241, R254, and 261-262 (RG). N425 is a binding site for GDP. N425 serves as the catalytic Proton acceptor. C427 serves as the catalytic Cysteine radical intermediate. GDP contacts are provided by residues E429 and 604–607 (TAST). The active-site Proton acceptor is E429.

It belongs to the ribonucleoside diphosphate reductase large chain family. Heterodimer of a large and a small subunit.

The catalysed reaction is a 2'-deoxyribonucleoside 5'-diphosphate + [thioredoxin]-disulfide + H2O = a ribonucleoside 5'-diphosphate + [thioredoxin]-dithiol. With respect to regulation, under complex allosteric control mediated by deoxynucleoside triphosphates and ATP binding to separate specificity and activation sites on the large subunit. The type of nucleotide bound at the specificity site determines substrate preference. It seems probable that ATP makes the enzyme reduce CDP and UDP, dGTP favors ADP reduction and dTTP favors GDP reduction. Stimulated by ATP and inhibited by dATP binding to the activity site. Provides the precursors necessary for DNA synthesis. Catalyzes the biosynthesis of deoxyribonucleotides from the corresponding ribonucleotides. The protein is Ribonucleoside-diphosphate reductase large chain (RNR1) of Cryptosporidium parvum.